A 100-amino-acid polypeptide reads, in one-letter code: Large ribosomal subunit protein mL53 (100 aa).

Belongs to the mitochondrion-specific ribosomal protein mL53 family. As to quaternary structure, component of the mitochondrial large ribosomal subunit (mt-LSU). Mature yeast 74S mitochondrial ribosomes consist of a small (37S) and a large (54S) subunit. The 37S small subunit contains a 15S ribosomal RNA (15S mt-rRNA) and at least 32 different proteins. The 54S large subunit contains a 21S rRNA (21S mt-rRNA) and at least 45 different proteins.

It localises to the mitochondrion. In terms of biological role, component of the mitochondrial ribosome (mitoribosome), a dedicated translation machinery responsible for the synthesis of mitochondrial genome-encoded proteins, including at least some of the essential transmembrane subunits of the mitochondrial respiratory chain. The mitoribosomes are attached to the mitochondrial inner membrane and translation products are cotranslationally integrated into the membrane. The sequence is that of Large ribosomal subunit protein mL53 (mrpl44) from Schizosaccharomyces pombe (strain 972 / ATCC 24843) (Fission yeast).